Reading from the N-terminus, the 314-residue chain is MSMLAPLRLVREPWNASEGNQSNATAGAGGAWCQGLDIPNELFLTLGLVSLVENLLVVAAILKNRNLHSPTYYFICCLAVSDMLVSVSNLAKTLFMLLMEHGVLVIRASIVRHMDNVIDMLICSSVVSSLSFLGVIAVDRYITIFYALRYHSIMTLQRAVVTMASVWLASTVSSTVLITYYRNNAILLCLIGFFLFMLVLMLVLYIHMFALACHHVRSISSQQKQPTIYRTSSLKGAVTLTILLGVFFICWGPFFFHLILIVTCPTNPFCTCFFSYFNLFLILIICNSVVDPLIYAFRSQELRRTLREVVLCSW.

The Extracellular portion of the chain corresponds to 1-35 (MSMLAPLRLVREPWNASEGNQSNATAGAGGAWCQG). Residues N15, N20, and N23 are each glycosylated (N-linked (GlcNAc...) asparagine). A helical transmembrane segment spans residues 36–61 (LDIPNELFLTLGLVSLVENLLVVAAI). Over 62–70 (LKNRNLHSP) the chain is Cytoplasmic. A helical transmembrane segment spans residues 71 to 91 (TYYFICCLAVSDMLVSVSNLA). At 92–116 (KTLFMLLMEHGVLVIRASIVRHMDN) the chain is on the extracellular side. Residues 117–138 (VIDMLICSSVVSSLSFLGVIAV) form a helical membrane-spanning segment. The Cytoplasmic segment spans residues 139-161 (DRYITIFYALRYHSIMTLQRAVV). A helical membrane pass occupies residues 162-181 (TMASVWLASTVSSTVLITYY). Residues 182-189 (RNNAILLC) lie on the Extracellular side of the membrane. The chain crosses the membrane as a helical span at residues 190 to 209 (LIGFFLFMLVLMLVLYIHMF). Residues 210–237 (ALACHHVRSISSQQKQPTIYRTSSLKGA) are Cytoplasmic-facing. A helical membrane pass occupies residues 238-263 (VTLTILLGVFFICWGPFFFHLILIVT). At 264–276 (CPTNPFCTCFFSY) the chain is on the extracellular side. A helical transmembrane segment spans residues 277-297 (FNLFLILIICNSVVDPLIYAF). Residues 298–314 (RSQELRRTLREVVLCSW) are Cytoplasmic-facing. C312 is lipidated: S-palmitoyl cysteine.

It belongs to the G-protein coupled receptor 1 family.

Its subcellular location is the cell membrane. Its function is as follows. Receptor for MSH (alpha, beta and gamma) and ACTH. The activity of this receptor is mediated by G proteins which activate adenylate cyclase. Mediates melanogenesis via regulation of cAMP signaling in melanocytes. In Gallus gallus (Chicken), this protein is Melanocyte-stimulating hormone receptor (MC1R).